The chain runs to 307 residues: UDP-N-acetylenolpyruvoylglucosamine reductase (307 aa).

The region spanning 33–197 (TGGNADFYIT…LEAAFTLAPG (165 aa)) is the FAD-binding PCMH-type domain. Arg176 is an active-site residue. Catalysis depends on Ser226, which acts as the Proton donor. Glu296 is a catalytic residue.

The protein belongs to the MurB family. FAD serves as cofactor.

It localises to the cytoplasm. It carries out the reaction UDP-N-acetyl-alpha-D-muramate + NADP(+) = UDP-N-acetyl-3-O-(1-carboxyvinyl)-alpha-D-glucosamine + NADPH + H(+). It functions in the pathway cell wall biogenesis; peptidoglycan biosynthesis. Cell wall formation. This Staphylococcus aureus (strain Mu3 / ATCC 700698) protein is UDP-N-acetylenolpyruvoylglucosamine reductase.